A 124-amino-acid chain; its full sequence is PEP-dependent dihydroxyacetone kinase 1, phosphoryl donor subunit DhaM (124 aa).

Residues 4–124 (PYGVVIISHS…AANLKTIEIK (121 aa)) form the PTS EIIA type-4 domain. The active-site Tele-phosphohistidine intermediate is His-12.

The protein belongs to the PEP-utilizing enzyme family. Homodimer. The dihydroxyacetone kinase complex is composed of a homodimer of DhaM, a homodimer of DhaK and the subunit DhaL.

The protein localises to the cytoplasm. It carries out the reaction dihydroxyacetone + phosphoenolpyruvate = dihydroxyacetone phosphate + pyruvate. Component of the dihydroxyacetone kinase complex, which is responsible for the phosphoenolpyruvate (PEP)-dependent phosphorylation of dihydroxyacetone. DhaM serves as the phosphoryl donor. Is phosphorylated by phosphoenolpyruvate in an EI- and HPr-dependent reaction, and a phosphorelay system on histidine residues finally leads to phosphoryl transfer to DhaL and dihydroxyacetone. The chain is PEP-dependent dihydroxyacetone kinase 1, phosphoryl donor subunit DhaM from Listeria innocua serovar 6a (strain ATCC BAA-680 / CLIP 11262).